The sequence spans 271 residues: Proteasome inhibitor PI31 subunit (271 aa).

Residue alanine 2 is modified to N-acetylalanine. The tract at residues 2 to 150 is important for homodimerization and interaction with FBXO7; that stretch reads AGLEVLFASA…PIHEQWEKAN (149 aa). Serine 153 is subject to Phosphoserine. Arginine 205 is modified (omega-N-methylarginine). Arginine 219 bears the Asymmetric dimethylarginine mark. Residues 222-271 are disordered; sequence IDPSSGLPNRLPPGAVPPGARFDPFGPIGTSPPGPNPDHLPPPGYDDMYL. Arginine 231 carries the omega-N-methylarginine modification. Positions 251-265 are enriched in pro residues; the sequence is TSPPGPNPDHLPPPG. Serine 252 is modified (phosphoserine).

This sequence belongs to the proteasome inhibitor PI31 family. In terms of assembly, monomer and homodimer. Interacts with FBXO7. Interacts with the 20S proteasome.

It is found in the cytoplasm. It localises to the endoplasmic reticulum. Its function is as follows. Plays an important role in control of proteasome function. Inhibits the hydrolysis of protein and peptide substrates by the 20S proteasome. Also inhibits the activation of the proteasome by the proteasome regulatory proteins PA700 and PA28. This Homo sapiens (Human) protein is Proteasome inhibitor PI31 subunit (PSMF1).